Reading from the N-terminus, the 297-residue chain is Cyclin-dependent kinase 1 (297 aa).

The Protein kinase domain occupies F4–F287. Residues I10–V18 and K33 contribute to the ATP site. Phosphothreonine is present on T14. The residue at position 15 (Y15) is a Phosphotyrosine. Catalysis depends on D128, which acts as the Proton acceptor. At Y160 the chain carries Phosphotyrosine. T161 carries the phosphothreonine; by CAK modification.

This sequence belongs to the protein kinase superfamily. CMGC Ser/Thr protein kinase family. CDC2/CDKX subfamily. As to quaternary structure, forms a stable but non-covalent complex with a regulatory subunit and with a cyclin. Component of the Frs-CycA-Cdk1 complex composed of Cdk1, CycA and Z600.

The protein localises to the nucleus. The enzyme catalyses L-seryl-[protein] + ATP = O-phospho-L-seryl-[protein] + ADP + H(+). The catalysed reaction is L-threonyl-[protein] + ATP = O-phospho-L-threonyl-[protein] + ADP + H(+). It catalyses the reaction [DNA-directed RNA polymerase] + ATP = phospho-[DNA-directed RNA polymerase] + ADP + H(+). Phosphorylation at Thr-14 or Tyr-15 inactivates the enzyme, while phosphorylation at Thr-161 activates it. Plays a key role in the control of the eukaryotic cell cycle. Required for entry into S-phase and mitosis. In embryos, promotes the release of Rif1 from chromatin during mid-blastula transition. p34 is a component of the kinase complex that phosphorylates the repetitive C-terminus of RNA polymerase II. In Drosophila melanogaster (Fruit fly), this protein is Cyclin-dependent kinase 1.